A 645-amino-acid polypeptide reads, in one-letter code: Translation factor GUF1 homolog, mitochondrial (645 aa).

Residues 40–215 (DKIRNFGIVA…AIIDRVPAPT (176 aa)) form the tr-type G domain. Residues 49 to 56 (AHVDHGKS), 108 to 112 (DTPGH), and 162 to 165 (NKID) contribute to the GTP site.

The protein belongs to the TRAFAC class translation factor GTPase superfamily. Classic translation factor GTPase family. LepA subfamily.

Its subcellular location is the mitochondrion inner membrane. The catalysed reaction is GTP + H2O = GDP + phosphate + H(+). In terms of biological role, promotes mitochondrial protein synthesis. May act as a fidelity factor of the translation reaction, by catalyzing a one-codon backward translocation of tRNAs on improperly translocated ribosomes. Binds to mitochondrial ribosomes in a GTP-dependent manner. This Caenorhabditis elegans protein is Translation factor GUF1 homolog, mitochondrial.